Consider the following 256-residue polypeptide: UPF0246 protein HRM2_41860 (256 aa).

The protein belongs to the UPF0246 family.

In Desulforapulum autotrophicum (strain ATCC 43914 / DSM 3382 / VKM B-1955 / HRM2) (Desulfobacterium autotrophicum), this protein is UPF0246 protein HRM2_41860.